A 362-amino-acid polypeptide reads, in one-letter code: Chorismate synthase (362 aa).

The disordered stretch occupies residues 39–59; sequence ADLQGDLDRRKPGTSRYTTPR. NADP(+) contacts are provided by Arg48 and Arg54. Residues 125-127, 238-239, Gly278, 293-297, and Arg319 contribute to the FMN site; these read RSS, NA, and KPTSS.

The protein belongs to the chorismate synthase family. As to quaternary structure, homotetramer. Requires FMNH2 as cofactor.

It carries out the reaction 5-O-(1-carboxyvinyl)-3-phosphoshikimate = chorismate + phosphate. The protein operates within metabolic intermediate biosynthesis; chorismate biosynthesis; chorismate from D-erythrose 4-phosphate and phosphoenolpyruvate: step 7/7. Its function is as follows. Catalyzes the anti-1,4-elimination of the C-3 phosphate and the C-6 proR hydrogen from 5-enolpyruvylshikimate-3-phosphate (EPSP) to yield chorismate, which is the branch point compound that serves as the starting substrate for the three terminal pathways of aromatic amino acid biosynthesis. This reaction introduces a second double bond into the aromatic ring system. This chain is Chorismate synthase, found in Aeromonas hydrophila subsp. hydrophila (strain ATCC 7966 / DSM 30187 / BCRC 13018 / CCUG 14551 / JCM 1027 / KCTC 2358 / NCIMB 9240 / NCTC 8049).